A 118-amino-acid polypeptide reads, in one-letter code: Large ribosomal subunit protein bL20 (118 aa).

The protein belongs to the bacterial ribosomal protein bL20 family.

In terms of biological role, binds directly to 23S ribosomal RNA and is necessary for the in vitro assembly process of the 50S ribosomal subunit. It is not involved in the protein synthesizing functions of that subunit. In Pectobacterium atrosepticum (strain SCRI 1043 / ATCC BAA-672) (Erwinia carotovora subsp. atroseptica), this protein is Large ribosomal subunit protein bL20.